Here is a 285-residue protein sequence, read N- to C-terminus: Casein kinase II subunit beta-2 (285 aa).

Positions 226 to 285 (FKDAEDEAELDDDDEEEEEEEEEEEELAAMDEAEGAQQQHAAAAAGTATGGVAAGGEGVH) are disordered. Residues 229-259 (AEDEAELDDDDEEEEEEEEEEEELAAMDEAE) show a composition bias toward acidic residues. Low complexity predominate over residues 260–272 (GAQQQHAAAAAGT). A compositionally biased stretch (gly residues) spans 273–285 (ATGGVAAGGEGVH).

Belongs to the casein kinase 2 subunit beta family. In terms of assembly, tetramer composed of two alpha chains, one beta chain and one beta' chain. Post-translationally, phosphorylated by alpha subunit.

Its function is as follows. Regulatory subunit of casein kinase II/CK2. As part of the kinase complex regulates the basal catalytic activity of the alpha subunit a constitutively active serine/threonine-protein kinase that phosphorylates a large number of substrates containing acidic residues C-terminal to the phosphorylated serine or threonine. The polypeptide is Casein kinase II subunit beta-2 (ckb-2) (Neurospora crassa (strain ATCC 24698 / 74-OR23-1A / CBS 708.71 / DSM 1257 / FGSC 987)).